Reading from the N-terminus, the 212-residue chain is MITIALPKGALLKDSISTFKKAGLDFSNALEENNRSLTFESNCKRAKALLVRNGDVPVYVSYGQADLGIVGYDVLRESELKVAKLLDLGFGGCHMSLAVKKNSNYLKPTDLPANCKVASKFIKTARSYFEELNIPVEIVHLTGSVELGPITGMAEAIVDLVATGKTLKENGLIKIDDLYYSTARLIGNPLSMRLDDNHLRDTILSIESTNAL.

Belongs to the ATP phosphoribosyltransferase family. Short subfamily. Heteromultimer composed of HisG and HisZ subunits.

Its subcellular location is the cytoplasm. It carries out the reaction 1-(5-phospho-beta-D-ribosyl)-ATP + diphosphate = 5-phospho-alpha-D-ribose 1-diphosphate + ATP. It participates in amino-acid biosynthesis; L-histidine biosynthesis; L-histidine from 5-phospho-alpha-D-ribose 1-diphosphate: step 1/9. Functionally, catalyzes the condensation of ATP and 5-phosphoribose 1-diphosphate to form N'-(5'-phosphoribosyl)-ATP (PR-ATP). Has a crucial role in the pathway because the rate of histidine biosynthesis seems to be controlled primarily by regulation of HisG enzymatic activity. The protein is ATP phosphoribosyltransferase of Prochlorococcus marinus (strain AS9601).